Reading from the N-terminus, the 248-residue chain is Sperm-specific protein Don juan (248 aa).

Positions 82–147 (KEGNQDELEN…EKKTKCAKKD (66 aa)) form a coiled coil. Positions 146–200 (KDPCKKKDPCKKKDPCKKKDPCKKKDPCKKKDPCKKKDPCKKKDPCKKKGGDLKK) are disordered. Repeat copies occupy residues 147–152 (DPCKKK), 153–158 (DPCKKK), 159–164 (DPCKKK), 165–170 (DPCKKK), 171–176 (DPCKKK), 177–182 (DPCKKK), 183–188 (DPCKKK), and 189–194 (DPCKKK). The 8 X 6 AA tandem repeat of D-P-C-K-K-K stretch occupies residues 147–194 (DPCKKKDPCKKKDPCKKKDPCKKKDPCKKKDPCKKKDPCKKKDPCKKK). Positions 197 to 244 (DLKKKCKKLAEKEKCKKLAKKEKMKKLQKKCKKMAQKEKCKKMAKKDK) form a coiled coil.

In terms of tissue distribution, expression limited to post-meiotic male germ cells. Expressed in elongated spermatids during individualization and in finally elongated nuclei of spermatids. After completion of nuclear shaping it is no longer expressed in the sperm heads with the onset of individualization.

It localises to the nucleus. The protein resides in the mitochondrion. Its function is as follows. May be involved in the final steps of mitochondrial differentiation within the flagellum. This is Sperm-specific protein Don juan (dj) from Drosophila melanogaster (Fruit fly).